The following is a 429-amino-acid chain: UDP-N-acetylglucosamine 1-carboxyvinyltransferase (429 aa).

22 to 23 is a binding site for phosphoenolpyruvate; sequence KN. Arg102 contacts UDP-N-acetyl-alpha-D-glucosamine. Cys126 acts as the Proton donor in catalysis. The residue at position 126 (Cys126) is a 2-(S-cysteinyl)pyruvic acid O-phosphothioketal. Residues 131-135, Asp316, and Ile338 contribute to the UDP-N-acetyl-alpha-D-glucosamine site; that span reads RPVDL.

The protein belongs to the EPSP synthase family. MurA subfamily.

Its subcellular location is the cytoplasm. The catalysed reaction is phosphoenolpyruvate + UDP-N-acetyl-alpha-D-glucosamine = UDP-N-acetyl-3-O-(1-carboxyvinyl)-alpha-D-glucosamine + phosphate. Its pathway is cell wall biogenesis; peptidoglycan biosynthesis. Its function is as follows. Cell wall formation. Adds enolpyruvyl to UDP-N-acetylglucosamine. This is UDP-N-acetylglucosamine 1-carboxyvinyltransferase from Methylorubrum populi (strain ATCC BAA-705 / NCIMB 13946 / BJ001) (Methylobacterium populi).